The sequence spans 444 residues: MITSPTNLNSLPIPPGDFGLPWLGETLNFLNDGDFGKKRQQQFGPIFKTRLFGKNVIFISGALANRFLFTKEQETFQATWPLSTRILLGPNALATQMGEIHRSRRKILYQAFLPRTLDSYLPKMDGIVQGYLEQWGKANEVIWYPQLRRMTFDVAATLFMGEKVSQNPQLFPWFETYIQGLFSLPIPLPNTLFGKSQRARALLLAELEKIIKARQQQPPSEEDALGILLAARDDNNQPLSLPELKDQILLLLFAGHETLTSALSSFCLLLGQHSDIRERVRQEQNKLQLSQELTAETLKKMPYLDQVLQEVLRLIPPVGGGFRELIQDCQFQGFHFPKGWLVSYQISQTHADPDLYPDPEKFDPERFTPDGSATHNPPFAHVPFGGGLRECLGKEFARLEMKLFATRLIQQFDWTLLPGQNLELVVTPSPRPKDNLRVKLHSLM.

Cys391 provides a ligand contact to heme.

This sequence belongs to the cytochrome P450 family. It depends on heme as a cofactor.

This Synechocystis sp. (strain ATCC 27184 / PCC 6803 / Kazusa) protein is Putative cytochrome P450 120 (cyp120).